The chain runs to 673 residues: MAQTGTDPQARIEALRREIREHDHRYYVLDAPVIADAEYDALMAELQALEAEHPELITPDSPSQRVAGRPAEGFGEVTHAEPMLSLDNAFEEADLAEFDRRVRQALGLDPVVYVAEPKLDGLSVSIRYEDGRLVRAGTRGDGRVGEAITENVRTIRSVPLRLRGEGWPPVMEVRGEVVIRRADFERLNEQRLADGERPFANPRNAAAGSLRQLDPRITARRRLTFFTFGVAAAGRLAASHHEVLDKLAGWGFRVNERVERVRGLDGCREYYQRLLADRDELSFEIDGVVYKVDDLDAREELGFTARAPRWAIAWKLPAQEATTVVRRILPSVGRTGAITPVAELEPVGVGGVTVSRATLHNLDEVRRKDVRKGDTVMVRRAGDVIPEITAVVTEKRPEGAEPWAMPAECPVCGSEVLRLDDEAVHRCMGGLYCPAQREGALLHFASRKALDIDGLGEKVVSQLVERGMVRSPADLFTLEHCQLAGLERMGDKSADNLVAALDKARRTTLPRFLYALGIQHVGEVTARRLAEHFGSLEAIMNADESALAETPDVGPVVAQAIAHFFAEPHNREVVQALRAAGVTWEEVDPAERGEQPLAGRTFVLTGTLSGMTRDEAKAALEALGARVSGSVSKKTDYLVAGEKAGSKLAKAESLGVEVLDEQALQALLQEHGR.

Residues 36-40 (DAEYD), 85-86 (SL), and Glu-116 each bind NAD(+). The active-site N6-AMP-lysine intermediate is Lys-118. Arg-139, Glu-176, Lys-291, and Lys-315 together coordinate NAD(+). Zn(2+) contacts are provided by Cys-409, Cys-412, Cys-427, and Cys-433. The region spanning 592–673 (RGEQPLAGRT…LQALLQEHGR (82 aa)) is the BRCT domain.

This sequence belongs to the NAD-dependent DNA ligase family. LigA subfamily. The cofactor is Mg(2+). Requires Mn(2+) as cofactor.

It catalyses the reaction NAD(+) + (deoxyribonucleotide)n-3'-hydroxyl + 5'-phospho-(deoxyribonucleotide)m = (deoxyribonucleotide)n+m + AMP + beta-nicotinamide D-nucleotide.. In terms of biological role, DNA ligase that catalyzes the formation of phosphodiester linkages between 5'-phosphoryl and 3'-hydroxyl groups in double-stranded DNA using NAD as a coenzyme and as the energy source for the reaction. It is essential for DNA replication and repair of damaged DNA. The protein is DNA ligase of Alkalilimnicola ehrlichii (strain ATCC BAA-1101 / DSM 17681 / MLHE-1).